The following is a 248-amino-acid chain: UDP-2,3-diacylglucosamine hydrolase (248 aa).

Mn(2+) contacts are provided by aspartate 7, histidine 9, aspartate 40, asparagine 78, and histidine 113. Residue 78-79 (NR) participates in substrate binding. Residues aspartate 121, serine 159, threonine 163, lysine 166, and histidine 194 each contribute to the substrate site. 2 residues coordinate Mn(2+): histidine 194 and histidine 196.

Belongs to the LpxH family. Requires Mn(2+) as cofactor.

It is found in the cell inner membrane. It carries out the reaction UDP-2-N,3-O-bis[(3R)-3-hydroxytetradecanoyl]-alpha-D-glucosamine + H2O = 2-N,3-O-bis[(3R)-3-hydroxytetradecanoyl]-alpha-D-glucosaminyl 1-phosphate + UMP + 2 H(+). Its pathway is glycolipid biosynthesis; lipid IV(A) biosynthesis; lipid IV(A) from (3R)-3-hydroxytetradecanoyl-[acyl-carrier-protein] and UDP-N-acetyl-alpha-D-glucosamine: step 4/6. Functionally, hydrolyzes the pyrophosphate bond of UDP-2,3-diacylglucosamine to yield 2,3-diacylglucosamine 1-phosphate (lipid X) and UMP by catalyzing the attack of water at the alpha-P atom. Involved in the biosynthesis of lipid A, a phosphorylated glycolipid that anchors the lipopolysaccharide to the outer membrane of the cell. This chain is UDP-2,3-diacylglucosamine hydrolase, found in Pseudomonas syringae pv. tomato (strain ATCC BAA-871 / DC3000).